Reading from the N-terminus, the 1701-residue chain is MRGGENRPPARVQSSSEELELRHQSLDAFPGRRLPGRGIQPAAKMSSVGKVTQVPNGKAYQQIFQAEVQLVHSLAATRKRAAERSVTLKSGRIPMMKKVETPEGEVMSPRQQKWMHSLPNDWIMENPVLHREKERAKREKARESENTIAAREVRGLMDTIVPEKISTSTFQRQAEHKRKSYESALASFQEEIAQVGKEMEPLIVDTGGLFLKKLTESDEEMNRLFLKVENDTNLEDYTIQALLELWDKVAGRLLLRKQEIKELDEALHSLEFSRTDKLKSVLKKYAEVIEKTSYLMRPEVYRLINEEAMVMNYALLGNRKALAQLFVNLMESTLQQELDSRHRWQGLVDTWKALKKEALLQSFSEFMASESIHTPPAVTKELEVMLKTQNVLQQRRLKHLCTICDLLPPSYSKTQLTEWHSSLNSLNKELDTYHVDCMMRIRLLYEKTWQECLMHVQNCKKQLLDWKAFTEEEAETLVNQFFFQMVGALQGKVEEDLELLDKSFETLADQTEWQSSHLFKYFQEVVQLWEAHQSELLVQELELEKRMEQHRQKHSLESQVQEAHLDRLLDQLRQQSDKETLAFHLEKVKDYLKNMKSRYECFHTLLTKEVMEYPAIMLKELNSYSSALSQYFFVREIFEQNLAGEVIFKFRQPEAHEKPSQKRVKKLRKKQGSKEDMTRSEESISSGTSTARSVEEVEEENDQEMESFITEEVLGQQKKSPLHAKMDESKEGSIQGLEEMQVEREGSLNPSLNEENVKGQGEKKEESEEEDEKEEEEEEEKLEEEKEEKEAQEEQESLSVGEEEDKEEGLEEIYYEDMESFTISSGNTYFVFVPLEEEHCRKSHSTFSAMFINDTSSAKFIEQVTIPSRLILEIKKQLRAGFFEHLEKWFDQCSLNTRVTVATKINELDSELELHLHLHQPRAQQIEKDIHNVRAAELLLHQEQLDSHCAGVTETLKKKRLMFCQFQEEQNVRSKNFRLKIYDMEHIFLNATRSQKLVTLSNTLHQELLSYVDVTQVSLRSFRQYLEESLGKLRYSNIEFIKHCRLFSEGGNFSPKEINSLCSRLEKEAARIELVESVIMLNMEKLENEYLDQANDVINKFESKFHNLSVDLIFIEKIQRLLTNLQVKIKCQVAKSNSQTNGLNFSLQQLQNKIKTCQESRGEKTTVTTEELLSFVQTWKEKLSQRIQYLNCSLDRVSMTELVFTNTILKDQEEDSDILTSSEALEEEAKLDVVTPESFTQLSRVGKPLIEDPAVDVIRKLLQLPNTKWPTHHCDKDPSQTGRGAWACGSRGSSEAGAGGAVCSPPVLCSCPGPSSPKGFKRHRCQPENSGKKAVPSASATSAGSFTPHPKPNKMERKYRVLGDKPPPAAEDFKGIILTLLWESSENLLTVAEEFYRKEKRPVTRPDCMCDTFDQCAENISKKILEYQSQANKYHNSCLIELRIQIRRFEELLPQVCWLVMENFKEHHWKKFFTSVKEIRGQFEEQQKRLEKRKDKNAQKLHLNLGHPVHFQEMESLHLSEEERQEELDSMIRMNKEKLEECTRRNGQVFITNLATFTEKFLLQLDEVVTIDDVQVARMEPPKQKLSMLIRRKLAGLSLKEESEKPLIERGSRKWPGIKPTEVTIQNKILLQPTSSISTTKTTLGHLAAVEARDAVYLKYLASFEEELKRIQDDCTSQIKEAQRWKDSWKQSLHTIQGLYV.

Positions 1-35 (MRGGENRPPARVQSSSEELELRHQSLDAFPGRRLP) are disordered. The stretch at 171 to 198 (QRQAEHKRKSYESALASFQEEIAQVGKE) forms a coiled coil. Disordered regions lie at residues 657–808 (EKPS…DKEE), 1272–1291 (HHCD…CGSR), and 1319–1354 (GFKR…KPNK). Positions 661 to 671 (QKRVKKLRKKQ) are enriched in basic residues. The segment covering 672–682 (GSKEDMTRSEE) has biased composition (basic and acidic residues). Residues 683 to 692 (SISSGTSTAR) show a composition bias toward polar residues. The segment covering 696–705 (EVEEENDQEM) has biased composition (acidic residues). The segment covering 755–766 (ENVKGQGEKKEE) has biased composition (basic and acidic residues). Residues 757 to 804 (VKGQGEKKEESEEEDEKEEEEEEEKLEEEKEEKEAQEEQESLSVGEEE) are a coiled coil. Residues 767-808 (SEEEDEKEEEEEEEKLEEEKEEKEAQEEQESLSVGEEEDKEE) are compositionally biased toward acidic residues.

In Homo sapiens (Human), this protein is Coiled-coil domain-containing protein 180 (CCDC180).